A 412-amino-acid polypeptide reads, in one-letter code: MAASQLCFVGFLEGIRGGDRLWNAKNDCRFSQRKKMRWSFYCLFTNFNYACVSQEPEKDLKFPIYSSLVVNPVGEVAISSEQKVYDVVLKQAALVEQQLRNRTVLEEKTGTTFLLNEAYDRCGQICEEYAKTFYLGTLLMTPERRRAIWAIYVWCRRTDELVDGPNASHITPSALDRWEARLEDLFAGRPYDMLDASLSDTVVNFPVDIQPFKDMIEGMRMDLKKSRYKNFDELYLYCYYVAGTVGLMSVPVMGIDPESDATTESVYNAALSLGIANQLTNILRDVGEDTRRGRVYLPQDELAEAGLSDEDIFNGKVTDRWRNFMKNQIKRARTFFQEAEKGIAELNQASRWPVLASLLLYRQILDEIEANDYNNFTKRAYVSKAKKLMAVPVAYGRSLIRPSMKKPSLVKP.

It belongs to the phytoene/squalene synthase family. Monomer. Expressed in roots, leaves, flower buds, sepals, petals, lips and lip crests.

Its subcellular location is the plastid. It is found in the chloroplast. It catalyses the reaction 2 (2E,6E,10E)-geranylgeranyl diphosphate = 15-cis-phytoene + 2 diphosphate. It participates in carotenoid biosynthesis; phytoene biosynthesis; all-trans-phytoene from geranylgeranyl diphosphate: step 1/1. Catalyzes the reaction from prephytoene diphosphate to phytoene. The polypeptide is Phytoene synthase, chloroplastic (PSY) (Oncidium hybrid cultivar (Orchid)).